Reading from the N-terminus, the 441-residue chain is Tol-Pal system protein TolB (441 aa).

The N-terminal stretch at 1 to 23 is a signal peptide; that stretch reads MRNAIATVLLGLAMLLPVGAVQA. The interval 420 to 441 is disordered; it reads RNLKPVKTPDGASDPSWSPLQN.

The protein belongs to the TolB family. In terms of assembly, the Tol-Pal system is composed of five core proteins: the inner membrane proteins TolA, TolQ and TolR, the periplasmic protein TolB and the outer membrane protein Pal. They form a network linking the inner and outer membranes and the peptidoglycan layer.

It localises to the periplasm. In terms of biological role, part of the Tol-Pal system, which plays a role in outer membrane invagination during cell division and is important for maintaining outer membrane integrity. The polypeptide is Tol-Pal system protein TolB (Ruegeria sp. (strain TM1040) (Silicibacter sp.)).